A 276-amino-acid chain; its full sequence is NAD(+)--dinitrogen-reductase ADP-D-ribosyltransferase (276 aa).

Monomer.

The catalysed reaction is L-arginyl-[dinitrogen reductase] + NAD(+) = N(omega)-alpha-(ADP-D-ribosyl)-L-arginyl-[dinitrogen reductase] + nicotinamide + H(+). Functionally, involved in the regulation of the nitrogen fixation activity by the reversible ADP-ribosylation of the dinitrogenase reductase component of the nitrogenase enzyme complex. The ADP-ribosyltransferase (DraT) transfers the ADP-ribose group from NAD to dinitrogenase reductase. The ADP-ribose group is removed through the action of the ADP-ribosylglycohydrolase (DraG). In Rhodospirillum rubrum, this protein is NAD(+)--dinitrogen-reductase ADP-D-ribosyltransferase (draT).